Reading from the N-terminus, the 127-residue chain is Large ribosomal subunit protein bL20 (127 aa).

The protein belongs to the bacterial ribosomal protein bL20 family.

In terms of biological role, binds directly to 23S ribosomal RNA and is necessary for the in vitro assembly process of the 50S ribosomal subunit. It is not involved in the protein synthesizing functions of that subunit. In Corynebacterium diphtheriae (strain ATCC 700971 / NCTC 13129 / Biotype gravis), this protein is Large ribosomal subunit protein bL20.